Here is a 362-residue protein sequence, read N- to C-terminus: Heat-inducible transcription repressor HrcA (362 aa).

It belongs to the HrcA family.

In terms of biological role, negative regulator of class I heat shock genes (grpE-dnaK-dnaJ and groELS operons). Prevents heat-shock induction of these operons. The polypeptide is Heat-inducible transcription repressor HrcA (Rhizobium leguminosarum bv. trifolii (strain WSM2304)).